A 145-amino-acid polypeptide reads, in one-letter code: Large ribosomal subunit protein uL16 (145 aa).

This sequence belongs to the universal ribosomal protein uL16 family. In terms of assembly, part of the 50S ribosomal subunit.

Functionally, binds 23S rRNA and is also seen to make contacts with the A and possibly P site tRNAs. This chain is Large ribosomal subunit protein uL16, found in Lachnospira eligens (strain ATCC 27750 / DSM 3376 / VPI C15-48 / C15-B4) (Eubacterium eligens).